Consider the following 235-residue polypeptide: Purine nucleoside phosphorylase DeoD-type (235 aa).

His4 contributes to the a purine D-ribonucleoside binding site. Phosphate contacts are provided by residues Gly20, Arg24, Arg43, and 87–90; that span reads RVGT. Residues Glu162, 179-181, and 203-204 contribute to the a purine D-ribonucleoside site; these read EME and SD. Asp204 acts as the Proton donor in catalysis.

This sequence belongs to the PNP/UDP phosphorylase family. Homohexamer; trimer of homodimers.

The enzyme catalyses a purine D-ribonucleoside + phosphate = a purine nucleobase + alpha-D-ribose 1-phosphate. It carries out the reaction a purine 2'-deoxy-D-ribonucleoside + phosphate = a purine nucleobase + 2-deoxy-alpha-D-ribose 1-phosphate. Catalyzes the reversible phosphorolytic breakdown of the N-glycosidic bond in the beta-(deoxy)ribonucleoside molecules, with the formation of the corresponding free purine bases and pentose-1-phosphate. This chain is Purine nucleoside phosphorylase DeoD-type, found in Bacillus cereus (strain ZK / E33L).